The primary structure comprises 122 residues: Large ribosomal subunit protein bL12 (122 aa).

Belongs to the bacterial ribosomal protein bL12 family. In terms of assembly, homodimer. Part of the ribosomal stalk of the 50S ribosomal subunit. Forms a multimeric L10(L12)X complex, where L10 forms an elongated spine to which 2 to 4 L12 dimers bind in a sequential fashion. Binds GTP-bound translation factors.

Functionally, forms part of the ribosomal stalk which helps the ribosome interact with GTP-bound translation factors. Is thus essential for accurate translation. The protein is Large ribosomal subunit protein bL12 of Buchnera aphidicola subsp. Schizaphis graminum (strain Sg).